Here is a 341-residue protein sequence, read N- to C-terminus: Ribosomal RNA small subunit methyltransferase C (341 aa).

It belongs to the methyltransferase superfamily. RsmC family. As to quaternary structure, monomer.

It is found in the cytoplasm. The enzyme catalyses guanosine(1207) in 16S rRNA + S-adenosyl-L-methionine = N(2)-methylguanosine(1207) in 16S rRNA + S-adenosyl-L-homocysteine + H(+). Specifically methylates the guanine in position 1207 of 16S rRNA in the 30S particle. The sequence is that of Ribosomal RNA small subunit methyltransferase C from Shewanella pealeana (strain ATCC 700345 / ANG-SQ1).